Consider the following 258-residue polypeptide: 14-3-3-like protein F (258 aa).

Belongs to the 14-3-3 family.

In Nicotiana tabacum (Common tobacco), this protein is 14-3-3-like protein F.